The chain runs to 333 residues: Fructose-1,6-bisphosphatase class 1 (333 aa).

Residues glutamate 90, aspartate 112, leucine 114, and aspartate 115 each coordinate Mg(2+). Substrate contacts are provided by residues 115–118 (DGSS), asparagine 207, and lysine 273. Position 279 (glutamate 279) interacts with Mg(2+).

The protein belongs to the FBPase class 1 family. Homotetramer. It depends on Mg(2+) as a cofactor.

Its subcellular location is the cytoplasm. It carries out the reaction beta-D-fructose 1,6-bisphosphate + H2O = beta-D-fructose 6-phosphate + phosphate. Its pathway is carbohydrate biosynthesis; gluconeogenesis. The protein is Fructose-1,6-bisphosphatase class 1 of Azoarcus sp. (strain BH72).